The primary structure comprises 272 residues: Undecaprenyl-diphosphatase (272 aa).

The next 8 helical transmembrane spans lie at 4–24 (FEVI…FLPI), 43–63 (GGRV…CWLY), 86–106 (ISVL…VDFI), 109–129 (VLFS…IIFW), 145–165 (ITFK…IPGT), 186–206 (TEFS…FDLI), 222–242 (VGFV…VLFV), and 249–269 (VFAW…MFFN).

It belongs to the UppP family.

Its subcellular location is the cell inner membrane. It carries out the reaction di-trans,octa-cis-undecaprenyl diphosphate + H2O = di-trans,octa-cis-undecaprenyl phosphate + phosphate + H(+). Catalyzes the dephosphorylation of undecaprenyl diphosphate (UPP). Confers resistance to bacitracin. This is Undecaprenyl-diphosphatase from Acinetobacter baumannii (strain AB307-0294).